A 215-amino-acid chain; its full sequence is Kunitz trypsin inhibitor 4 (215 aa).

An N-terminal signal peptide occupies residues 1-28 (MTKTTKTMNPKFYLVLALTAVLASNAYG). 2 disulfide bridges follow: Cys-66-Cys-112 and Cys-165-Cys-176. Asn-206 is a glycosylation site (N-linked (GlcNAc...) asparagine).

It belongs to the protease inhibitor I3 (leguminous Kunitz-type inhibitor) family. In terms of tissue distribution, expressed in roots.

It is found in the endoplasmic reticulum. Functionally, exhibits Kunitz trypsin protease inhibitor activity. Involved in modulating programmed cell death (PCD) in plant-pathogen interactions. Can inhibit both serine proteases and cysteine proteases. May be involved in the modulation of the proteases that participate in the hydrolysis of dietary proteins in the gut of spider mites. The polypeptide is Kunitz trypsin inhibitor 4 (Arabidopsis thaliana (Mouse-ear cress)).